The chain runs to 368 residues: Cystathionine beta-lyase (368 aa).

At K221 the chain carries N6-(pyridoxal phosphate)lysine.

This sequence belongs to the class-II pyridoxal-phosphate-dependent aminotransferase family. MalY/PatB cystathionine beta-lyase subfamily. Pyridoxal 5'-phosphate serves as cofactor.

It catalyses the reaction L,L-cystathionine + H2O = L-homocysteine + pyruvate + NH4(+). The catalysed reaction is an S-substituted L-cysteine + H2O = a thiol + pyruvate + NH4(+). The protein operates within amino-acid biosynthesis; L-methionine biosynthesis via de novo pathway; L-homocysteine from L-cystathionine: step 1/1. Functionally, catalyzes the transformation of cystathionine to homocysteine. This chain is Cystathionine beta-lyase (metC), found in Corynebacterium glutamicum (Brevibacterium saccharolyticum).